A 122-amino-acid chain; its full sequence is UPF0482 protein Spro_2288 (122 aa).

An N-terminal signal peptide occupies residues 1 to 31 (MKTLSTQRLLRGMLPVAMLMLMGAWQAPALA). Positions 46-71 (SNSGAMSTEAARQSKQQFNDTKSLRN) are disordered.

This sequence belongs to the UPF0482 family.

This chain is UPF0482 protein Spro_2288, found in Serratia proteamaculans (strain 568).